Reading from the N-terminus, the 376-residue chain is Chaperone protein DnaJ (376 aa).

Positions 5 to 70 (DYYEILGVSK…QKRAAYDQYG (66 aa)) constitute a J domain. Residues 131 to 209 (GVTKEIRIPT…CHGHGRVERS (79 aa)) form a CR-type zinc finger. Residues Cys144, Cys147, Cys161, Cys164, Cys183, Cys186, Cys197, and Cys200 each coordinate Zn(2+). CXXCXGXG motif repeat units lie at residues 144-151 (CDVCHGSG), 161-168 (CPTCHGSG), 183-190 (CPHCQGRG), and 197-204 (CNKCHGHG).

This sequence belongs to the DnaJ family. In terms of assembly, homodimer. It depends on Zn(2+) as a cofactor.

Its subcellular location is the cytoplasm. In terms of biological role, participates actively in the response to hyperosmotic and heat shock by preventing the aggregation of stress-denatured proteins and by disaggregating proteins, also in an autonomous, DnaK-independent fashion. Unfolded proteins bind initially to DnaJ; upon interaction with the DnaJ-bound protein, DnaK hydrolyzes its bound ATP, resulting in the formation of a stable complex. GrpE releases ADP from DnaK; ATP binding to DnaK triggers the release of the substrate protein, thus completing the reaction cycle. Several rounds of ATP-dependent interactions between DnaJ, DnaK and GrpE are required for fully efficient folding. Also involved, together with DnaK and GrpE, in the DNA replication of plasmids through activation of initiation proteins. The polypeptide is Chaperone protein DnaJ (Escherichia coli O157:H7 (strain EC4115 / EHEC)).